Here is a 160-residue protein sequence, read N- to C-terminus: Small ribosomal subunit protein uS7 (160 aa).

This sequence belongs to the universal ribosomal protein uS7 family. As to quaternary structure, part of the 30S ribosomal subunit. Contacts proteins S9 and S11.

Functionally, one of the primary rRNA binding proteins, it binds directly to 16S rRNA where it nucleates assembly of the head domain of the 30S subunit. Is located at the subunit interface close to the decoding center, probably blocks exit of the E-site tRNA. This chain is Small ribosomal subunit protein uS7, found in Rickettsia canadensis (strain McKiel).